We begin with the raw amino-acid sequence, 56 residues long: MIKVKLVRSWIGCKPKQRKVLDALGLRKIRCEKSFEDNAAIRGMIAEVKHLVEVSE.

This sequence belongs to the universal ribosomal protein uL30 family. Part of the 50S ribosomal subunit.

This chain is Large ribosomal subunit protein uL30, found in Nitratidesulfovibrio vulgaris (strain DSM 19637 / Miyazaki F) (Desulfovibrio vulgaris).